A 381-amino-acid chain; its full sequence is Ubiquitin-associated protein 1-like (381 aa).

Residues 4 to 50 form the UMA domain; sequence LDGVPFKLPKGFVIGTEPLPGPELSVPACGEVLLGSMHDFSLERTAL. 2 disordered regions span residues 87-141 and 185-228; these read LAPA…PGRR and SLCP…LRSH. Residues 95–104 are compositionally biased toward basic and acidic residues; sequence RDPEAGHQER. Positions 105 to 123 are enriched in acidic residues; sequence PEEEGEDEAEASSGSEEEP. The span at 124 to 141 shows a compositional bias: low complexity; the sequence is APSSLQPGSPASPGPGRR. Residues 197 to 216 show a composition bias toward pro residues; sequence ASPPGPAPQHPAAPASPPRP.

This chain is Ubiquitin-associated protein 1-like (UBAP1L), found in Homo sapiens (Human).